A 291-amino-acid chain; its full sequence is Ribonuclease Z (291 aa).

7 residues coordinate Zn(2+): histidine 60, histidine 62, aspartate 64, histidine 65, histidine 132, aspartate 200, and histidine 256. Aspartate 64 serves as the catalytic Proton acceptor.

The protein belongs to the RNase Z family. Homodimer. Zn(2+) serves as cofactor.

The enzyme catalyses Endonucleolytic cleavage of RNA, removing extra 3' nucleotides from tRNA precursor, generating 3' termini of tRNAs. A 3'-hydroxy group is left at the tRNA terminus and a 5'-phosphoryl group is left at the trailer molecule.. Its function is as follows. Zinc phosphodiesterase, which displays some tRNA 3'-processing endonuclease activity. Probably involved in tRNA maturation, by removing a 3'-trailer from precursor tRNA. In Metallosphaera sedula (strain ATCC 51363 / DSM 5348 / JCM 9185 / NBRC 15509 / TH2), this protein is Ribonuclease Z.